Here is a 112-residue protein sequence, read N- to C-terminus: T cell receptor alpha variable 2 (112 aa).

The first 25 residues, 1 to 25, serve as a signal peptide directing secretion; that stretch reads MALQSTLGAVWLGLLLNSLWKVAES. One can recognise an Ig-like domain in the interval 26–112; the sequence is KDQVFQPSTV…DAAVYYCAVE (87 aa). Cys47 and Cys109 are disulfide-bonded. N-linked (GlcNAc...) asparagine glycans are attached at residues Asn48 and Asn84.

In terms of assembly, alpha-beta TR is a heterodimer composed of an alpha and beta chain; disulfide-linked. The alpha-beta TR is associated with the transmembrane signaling CD3 coreceptor proteins to form the TR-CD3 (TcR or TCR). The assembly of alpha-beta TR heterodimers with CD3 occurs in the endoplasmic reticulum where a single alpha-beta TR heterodimer associates with one CD3D-CD3E heterodimer, one CD3G-CD3E heterodimer and one CD247 homodimer forming a stable octameric structure. CD3D-CD3E and CD3G-CD3E heterodimers preferentially associate with TR alpha and TR beta chains, respectively. The association of the CD247 homodimer is the last step of TcR assembly in the endoplasmic reticulum and is required for transport to the cell surface.

The protein resides in the cell membrane. Functionally, v region of the variable domain of T cell receptor (TR) alpha chain that participates in the antigen recognition. Alpha-beta T cell receptors are antigen specific receptors which are essential to the immune response and are present on the cell surface of T lymphocytes. Recognize peptide-major histocompatibility (MH) (pMH) complexes that are displayed by antigen presenting cells (APC), a prerequisite for efficient T cell adaptive immunity against pathogens. Binding of alpha-beta TR to pMH complex initiates TR-CD3 clustering on the cell surface and intracellular activation of LCK that phosphorylates the ITAM motifs of CD3G, CD3D, CD3E and CD247 enabling the recruitment of ZAP70. In turn ZAP70 phosphorylates LAT, which recruits numerous signaling molecules to form the LAT signalosome. The LAT signalosome propagates signal branching to three major signaling pathways, the calcium, the mitogen-activated protein kinase (MAPK) kinase and the nuclear factor NF-kappa-B (NF-kB) pathways, leading to the mobilization of transcription factors that are critical for gene expression and essential for T cell growth and differentiation. The T cell repertoire is generated in the thymus, by V-(D)-J rearrangement. This repertoire is then shaped by intrathymic selection events to generate a peripheral T cell pool of self-MH restricted, non-autoaggressive T cells. Post-thymic interaction of alpha-beta TR with the pMH complexes shapes TR structural and functional avidity. This chain is T cell receptor alpha variable 2, found in Homo sapiens (Human).